The primary structure comprises 482 residues: Bifunctional protein HldE (482 aa).

Residues 1–322 form a ribokinase region; it reads MFGLESKSPK…QYIHTQPSNL (322 aa). Residue 198-201 participates in ATP binding; sequence NKKE. Residue aspartate 267 is part of the active site. Residues 350-482 form a cytidylyltransferase region; that stretch reads FTNGCFDILH…IQRSKICKHS (133 aa).

This sequence in the N-terminal section; belongs to the carbohydrate kinase PfkB family. In the C-terminal section; belongs to the cytidylyltransferase family. In terms of assembly, homodimer.

It catalyses the reaction D-glycero-beta-D-manno-heptose 7-phosphate + ATP = D-glycero-beta-D-manno-heptose 1,7-bisphosphate + ADP + H(+). The enzyme catalyses D-glycero-beta-D-manno-heptose 1-phosphate + ATP + H(+) = ADP-D-glycero-beta-D-manno-heptose + diphosphate. Its pathway is nucleotide-sugar biosynthesis; ADP-L-glycero-beta-D-manno-heptose biosynthesis; ADP-L-glycero-beta-D-manno-heptose from D-glycero-beta-D-manno-heptose 7-phosphate: step 1/4. It functions in the pathway nucleotide-sugar biosynthesis; ADP-L-glycero-beta-D-manno-heptose biosynthesis; ADP-L-glycero-beta-D-manno-heptose from D-glycero-beta-D-manno-heptose 7-phosphate: step 3/4. The protein operates within bacterial outer membrane biogenesis; LPS core biosynthesis. In terms of biological role, catalyzes the phosphorylation of D-glycero-D-manno-heptose 7-phosphate at the C-1 position to selectively form D-glycero-beta-D-manno-heptose-1,7-bisphosphate. Functionally, catalyzes the ADP transfer from ATP to D-glycero-beta-D-manno-heptose 1-phosphate, yielding ADP-D-glycero-beta-D-manno-heptose. The protein is Bifunctional protein HldE of Helicobacter hepaticus (strain ATCC 51449 / 3B1).